The following is a 132-amino-acid chain: D-ribose pyranase (132 aa).

Residue His20 is the Proton donor of the active site. Residues Asp28, His99, and 121–123 each bind substrate; that span reads YSN.

It belongs to the RbsD / FucU family. RbsD subfamily. In terms of assembly, homodecamer.

It localises to the cytoplasm. The catalysed reaction is beta-D-ribopyranose = beta-D-ribofuranose. The protein operates within carbohydrate metabolism; D-ribose degradation; D-ribose 5-phosphate from beta-D-ribopyranose: step 1/2. In terms of biological role, catalyzes the interconversion of beta-pyran and beta-furan forms of D-ribose. This Streptococcus agalactiae serotype III (strain NEM316) protein is D-ribose pyranase.